A 434-amino-acid polypeptide reads, in one-letter code: Glutamate-1-semialdehyde 2,1-aminomutase (434 aa).

Position 270 is an N6-(pyridoxal phosphate)lysine (lysine 270).

The protein belongs to the class-III pyridoxal-phosphate-dependent aminotransferase family. HemL subfamily. In terms of assembly, homodimer. Requires pyridoxal 5'-phosphate as cofactor.

Its subcellular location is the cytoplasm. The enzyme catalyses (S)-4-amino-5-oxopentanoate = 5-aminolevulinate. It participates in porphyrin-containing compound metabolism; protoporphyrin-IX biosynthesis; 5-aminolevulinate from L-glutamyl-tRNA(Glu): step 2/2. The polypeptide is Glutamate-1-semialdehyde 2,1-aminomutase (Pelotomaculum thermopropionicum (strain DSM 13744 / JCM 10971 / SI)).